We begin with the raw amino-acid sequence, 405 residues long: Cytochrome P450 107B1 (405 aa).

Cys-352 serves as a coordination point for heme.

The protein belongs to the cytochrome P450 family. Heme serves as cofactor.

The protein resides in the cytoplasm. Functionally, not known, probably involved in the catabolism of octane and guaiacol. It displays a weak activity in the O-dealkylation of 7-ethoxycoumarin. This is Cytochrome P450 107B1 (cyp107B1) from Saccharopolyspora erythraea (strain ATCC 11635 / DSM 40517 / JCM 4748 / NBRC 13426 / NCIMB 8594 / NRRL 2338).